An 883-amino-acid chain; its full sequence is DNA topoisomerase 1 (883 aa).

The Toprim domain occupies 2–126 (PKLVIVESPT…TKRMVFHEIT (125 aa)). The Mg(2+) site is built by Glu8 and Asp95. In terms of domain architecture, Topo IA-type catalytic spans 141–583 (DQRLVHAQET…QFYRGDRGLE (443 aa)). The interaction with DNA stretch occupies residues 175–180 (SAGRVQ). Residues 271-294 (SLEEKPTTRKPAPPFTTSTLQQES) form a disordered region. Tyr320 functions as the O-(5'-phospho-DNA)-tyrosine intermediate in the catalytic mechanism. Residues 842-883 (AKAGQAKAKGGRRSTGTPKSGETKARTTKTTKKTTTRRTTSR) are disordered. Basic residues predominate over residues 867–883 (RTTKTTKKTTTRRTTSR).

Belongs to the type IA topoisomerase family. In terms of assembly, monomer. Mg(2+) is required as a cofactor.

It catalyses the reaction ATP-independent breakage of single-stranded DNA, followed by passage and rejoining.. Its function is as follows. Releases the supercoiling and torsional tension of DNA, which is introduced during the DNA replication and transcription, by transiently cleaving and rejoining one strand of the DNA duplex. Introduces a single-strand break via transesterification at a target site in duplex DNA. The scissile phosphodiester is attacked by the catalytic tyrosine of the enzyme, resulting in the formation of a DNA-(5'-phosphotyrosyl)-enzyme intermediate and the expulsion of a 3'-OH DNA strand. The free DNA strand then undergoes passage around the unbroken strand, thus removing DNA supercoils. Finally, in the religation step, the DNA 3'-OH attacks the covalent intermediate to expel the active-site tyrosine and restore the DNA phosphodiester backbone. This is DNA topoisomerase 1 from Synechococcus elongatus (strain ATCC 33912 / PCC 7942 / FACHB-805) (Anacystis nidulans R2).